A 389-amino-acid polypeptide reads, in one-letter code: Alanine racemase (389 aa).

Lys-48 serves as the catalytic Proton acceptor; specific for D-alanine. Residue Lys-48 is modified to N6-(pyridoxal phosphate)lysine. Residue Arg-144 participates in substrate binding. Tyr-281 functions as the Proton acceptor; specific for L-alanine in the catalytic mechanism. Met-329 lines the substrate pocket.

It belongs to the alanine racemase family. Pyridoxal 5'-phosphate is required as a cofactor.

It carries out the reaction L-alanine = D-alanine. Its pathway is amino-acid biosynthesis; D-alanine biosynthesis; D-alanine from L-alanine: step 1/1. Catalyzes the interconversion of L-alanine and D-alanine. May also act on other amino acids. This is Alanine racemase (alr) from Leptospira interrogans serogroup Icterohaemorrhagiae serovar Lai (strain 56601).